The following is a 333-amino-acid chain: F420-dependent glucose-6-phosphate dehydrogenase (333 aa).

Aspartate 37 contributes to the coenzyme F420-(gamma-Glu)n binding site. Histidine 38 (proton donor) is an active-site residue. Residues threonine 74 and 105–106 contribute to the coenzyme F420-(gamma-Glu)n site; that span reads SG. Glutamate 107 acts as the Proton acceptor in catalysis. Residues asparagine 110, 174-175, and 177-178 contribute to the coenzyme F420-(gamma-Glu)n site; these read GG and VV. Residues threonine 192, lysine 195, lysine 256, and arginine 280 each contribute to the substrate site.

This sequence belongs to the F420-dependent glucose-6-phosphate dehydrogenase family. In terms of assembly, homodimer.

The catalysed reaction is oxidized coenzyme F420-(gamma-L-Glu)(n) + D-glucose 6-phosphate + H(+) = 6-phospho-D-glucono-1,5-lactone + reduced coenzyme F420-(gamma-L-Glu)(n). In terms of biological role, catalyzes the coenzyme F420-dependent oxidation of glucose 6-phosphate (G6P) to 6-phosphogluconolactone. The polypeptide is F420-dependent glucose-6-phosphate dehydrogenase (Amycolatopsis mediterranei (strain U-32)).